The sequence spans 636 residues: Chaperone protein HtpG (636 aa).

Positions M1 to R342 are a; substrate-binding. The b stretch occupies residues E343–K558. Residues M559 to L636 are c.

This sequence belongs to the heat shock protein 90 family. Homodimer.

It localises to the cytoplasm. In terms of biological role, molecular chaperone. Has ATPase activity. The polypeptide is Chaperone protein HtpG (Salinispora tropica (strain ATCC BAA-916 / DSM 44818 / JCM 13857 / NBRC 105044 / CNB-440)).